Here is a 283-residue protein sequence, read N- to C-terminus: Polyamine aminopropyltransferase (283 aa).

One can recognise a PABS domain in the interval 5-240 (NTWFTEIHQD…GWWTATMACK (236 aa)). Glutamine 33 contacts S-methyl-5'-thioadenosine. Spermidine-binding residues include histidine 64 and aspartate 88. S-methyl-5'-thioadenosine-binding positions include aspartate 108 and 139 to 140 (DG). The Proton acceptor role is filled by aspartate 158. 158–161 (DSTD) contributes to the spermidine binding site. Residue proline 165 coordinates S-methyl-5'-thioadenosine.

This sequence belongs to the spermidine/spermine synthase family. Homodimer or homotetramer.

It localises to the cytoplasm. It carries out the reaction S-adenosyl 3-(methylsulfanyl)propylamine + putrescine = S-methyl-5'-thioadenosine + spermidine + H(+). The protein operates within amine and polyamine biosynthesis; spermidine biosynthesis; spermidine from putrescine: step 1/1. Functionally, catalyzes the irreversible transfer of a propylamine group from the amino donor S-adenosylmethioninamine (decarboxy-AdoMet) to putrescine (1,4-diaminobutane) to yield spermidine. The protein is Polyamine aminopropyltransferase of Thioalkalivibrio sulfidiphilus (strain HL-EbGR7).